We begin with the raw amino-acid sequence, 299 residues long: Putative pyrroline-5-carboxylate reductase 4 (299 aa).

It belongs to the pyrroline-5-carboxylate reductase family.

The catalysed reaction is L-proline + NADP(+) = (S)-1-pyrroline-5-carboxylate + NADPH + 2 H(+). It catalyses the reaction L-proline + NAD(+) = (S)-1-pyrroline-5-carboxylate + NADH + 2 H(+). The protein operates within amino-acid biosynthesis; L-proline biosynthesis; L-proline from L-glutamate 5-semialdehyde: step 1/1. This Caenorhabditis elegans protein is Putative pyrroline-5-carboxylate reductase 4.